We begin with the raw amino-acid sequence, 235 residues long: Large ribosomal subunit protein uL1 (235 aa).

The segment at 1 to 22 (MSKNSKAYRAAAEKVDRSNPYT) is disordered.

It belongs to the universal ribosomal protein uL1 family. Part of the 50S ribosomal subunit.

Binds directly to 23S rRNA. The L1 stalk is quite mobile in the ribosome, and is involved in E site tRNA release. In terms of biological role, protein L1 is also a translational repressor protein, it controls the translation of the L11 operon by binding to its mRNA. The polypeptide is Large ribosomal subunit protein uL1 (Mycobacterium ulcerans (strain Agy99)).